Reading from the N-terminus, the 262-residue chain is Acyl-[acyl-carrier-protein]--UDP-N-acetylglucosamine O-acyltransferase (262 aa).

This sequence belongs to the transferase hexapeptide repeat family. LpxA subfamily. Homotrimer.

Its subcellular location is the cytoplasm. It catalyses the reaction a (3R)-hydroxyacyl-[ACP] + UDP-N-acetyl-alpha-D-glucosamine = a UDP-3-O-[(3R)-3-hydroxyacyl]-N-acetyl-alpha-D-glucosamine + holo-[ACP]. The protein operates within glycolipid biosynthesis; lipid IV(A) biosynthesis; lipid IV(A) from (3R)-3-hydroxytetradecanoyl-[acyl-carrier-protein] and UDP-N-acetyl-alpha-D-glucosamine: step 1/6. In terms of biological role, involved in the biosynthesis of lipid A, a phosphorylated glycolipid that anchors the lipopolysaccharide to the outer membrane of the cell. This is Acyl-[acyl-carrier-protein]--UDP-N-acetylglucosamine O-acyltransferase from Salmonella typhi.